Reading from the N-terminus, the 356-residue chain is MRQILFAGAIGLFLTLVGTPLLIKLLARKGYGQFIRDDGPRTHGSKKGTPTMGGIAFILATIVAYLLAKVITGEDIRYSGLLVLFLMAGMGLVGFLDDYIKIVKQRSLGLRAKAKMAGQLIVGIAFAVLSLQFPNSMNYTPASTRLSFVEDFGWSIGPVLFCVWALFMILAMSNGVNLTDGLDGLATGASVMVFGAYTFIGLWQFQESCANADNLTNPSACYEVRDPLDLAVVAAALMGACFGFLWWNTSPAKIFMGDTGSLALGGALAGLAILSRTEFLLAILGGLFVMITMSVVIQVGSFKMTGKRVFRMAPLQHHFELKGWSEVLVVVRFWIIQGMCVIVGLGLFYAGWAAKK.

The next 10 helical transmembrane spans lie at Gln-3–Ile-23, Thr-51–Ile-71, Gly-80–Ile-100, Ala-114–Pro-134, Phe-152–Met-172, Leu-185–Phe-205, Pro-227–Trp-247, Ile-254–Leu-274, Phe-279–Val-299, and Phe-333–Ala-353.

Belongs to the glycosyltransferase 4 family. MraY subfamily. It depends on Mg(2+) as a cofactor.

It localises to the cell membrane. The catalysed reaction is UDP-N-acetyl-alpha-D-muramoyl-L-alanyl-gamma-D-glutamyl-meso-2,6-diaminopimeloyl-D-alanyl-D-alanine + di-trans,octa-cis-undecaprenyl phosphate = di-trans,octa-cis-undecaprenyl diphospho-N-acetyl-alpha-D-muramoyl-L-alanyl-D-glutamyl-meso-2,6-diaminopimeloyl-D-alanyl-D-alanine + UMP. It participates in cell wall biogenesis; peptidoglycan biosynthesis. Its function is as follows. Catalyzes the initial step of the lipid cycle reactions in the biosynthesis of the cell wall peptidoglycan: transfers peptidoglycan precursor phospho-MurNAc-pentapeptide from UDP-MurNAc-pentapeptide onto the lipid carrier undecaprenyl phosphate, yielding undecaprenyl-pyrophosphoryl-MurNAc-pentapeptide, known as lipid I. The sequence is that of Phospho-N-acetylmuramoyl-pentapeptide-transferase from Streptomyces griseus subsp. griseus (strain JCM 4626 / CBS 651.72 / NBRC 13350 / KCC S-0626 / ISP 5235).